A 473-amino-acid polypeptide reads, in one-letter code: Argininosuccinate lyase (473 aa).

The protein belongs to the lyase 1 family. Argininosuccinate lyase subfamily.

The protein localises to the cytoplasm. The catalysed reaction is 2-(N(omega)-L-arginino)succinate = fumarate + L-arginine. The protein operates within amino-acid biosynthesis; L-arginine biosynthesis; L-arginine from L-ornithine and carbamoyl phosphate: step 3/3. The polypeptide is Argininosuccinate lyase (Chelativorans sp. (strain BNC1)).